The sequence spans 108 residues: Peptidyl-prolyl cis-trans isomerase FKBP1A (108 aa).

In terms of domain architecture, PPIase FKBP-type spans 20 to 108 (GQTVVVHYVG…TFDVELLRLE (89 aa)).

It belongs to the FKBP-type PPIase family. FKBP1 subfamily.

It is found in the cytoplasm. The enzyme catalyses [protein]-peptidylproline (omega=180) = [protein]-peptidylproline (omega=0). Inhibited by both FK506 and rapamycin. Its function is as follows. Keeps in an inactive conformation TGFBR1, the TGF-beta type I serine/threonine kinase receptor, preventing TGF-beta receptor activation in absence of ligand. May modulate the RYR1 calcium channel activity. PPIases accelerate the folding of proteins. It catalyzes the cis-trans isomerization of proline imidic peptide bonds in oligopeptides. This is Peptidyl-prolyl cis-trans isomerase FKBP1A (fkbp1a) from Xenopus laevis (African clawed frog).